Consider the following 439-residue polypeptide: SH3 domain-containing protein 1 (439 aa).

The BAR domain maps to 32 to 263; sequence DAVVVDEEEL…MIAEEEAIGS (232 aa). Positions 277 to 291 are enriched in polar residues; that stretch reads SLPQQEPNSNSSGEI. The interval 277 to 362 is disordered; the sequence is SLPQQEPNSN…SDDHHNHQLL (86 aa). Residues 318-358 show a composition bias toward basic and acidic residues; it reads SPKDEMKSSPQEETKSNHQKEIKSSPQEEIKKSNGSDDHHN. Residues 366–425 form the SH3 domain; that stretch reads DSYFLAKVVHPFDAQAPGELSLAVDDYVIVRQVAGTGWSEGEYKGKAGWFPSAYVEKQEK.

As to quaternary structure, interacts with the auxilin-like protein AUXI1. As to expression, highly expressed in flowers. Detected in seedlings, roots, leaves and stems.

The protein localises to the cytoplasmic vesicle. The protein resides in the clathrin-coated vesicle. It localises to the cell membrane. It is found in the golgi apparatus. Its subcellular location is the trans-Golgi network. The protein localises to the endoplasmic reticulum. In terms of biological role, lipid binding protein bound strongly to phosphatidic acid, phosphatidylinositol-4-phosphate and phosphatidylinositol-4,5-bisphosphate. Binds actin in vitro. Involved in trafficking and modification of clathrin-coated vesicles. This Arabidopsis thaliana (Mouse-ear cress) protein is SH3 domain-containing protein 1 (SH3P1).